A 196-amino-acid chain; its full sequence is UPF0319 protein VV1_0237 (196 aa).

The signal sequence occupies residues 1 to 19 (MKKMMILSALALFSSSLFA).

This sequence belongs to the UPF0319 family.

This is UPF0319 protein VV1_0237 from Vibrio vulnificus (strain CMCP6).